The following is a 340-amino-acid chain: Meiotic recombination protein DMC1/LIM15 homolog (340 aa).

126 to 133 (GEFRTGKT) is a binding site for ATP. Arginine 230 is a dsDNA binding site. SsDNA is bound by residues arginine 230, phenylalanine 233, arginine 236, arginine 242, and arginine 311. DsDNA-binding residues include arginine 236 and arginine 242.

It belongs to the RecA family. DMC1 subfamily. Double stacked ring-shaped homooctamer. Interacts with BRCA2. Interacts with the MND1-PSMC3IP heterodimer. Interacts with RAD51AP1; the interaction is direct and stimulates DMC1-mediated homologous recombination. Testis.

It localises to the nucleus. The protein localises to the chromosome. Participates in meiotic recombination, specifically in homologous strand assimilation, which is required for the resolution of meiotic double-strand breaks. The polypeptide is Meiotic recombination protein DMC1/LIM15 homolog (Mus musculus (Mouse)).